The sequence spans 660 residues: Acetyl-coenzyme A synthetase (660 aa).

CoA-binding positions include 197–200 (RGGK) and Thr-317. Residues 397–399 (GEP), 421–426 (DTWWQT), Asp-512, and Arg-528 contribute to the ATP site. CoA is bound at residue Ser-536. Residue Arg-539 participates in ATP binding. Val-550, His-552, and Val-555 together coordinate Mg(2+). An N6-acetyllysine modification is found at Lys-625.

The protein belongs to the ATP-dependent AMP-binding enzyme family. Mg(2+) is required as a cofactor. Post-translationally, acetylated. Deacetylation by the SIR2-homolog deacetylase activates the enzyme.

The catalysed reaction is acetate + ATP + CoA = acetyl-CoA + AMP + diphosphate. Its function is as follows. Catalyzes the conversion of acetate into acetyl-CoA (AcCoA), an essential intermediate at the junction of anabolic and catabolic pathways. AcsA undergoes a two-step reaction. In the first half reaction, AcsA combines acetate with ATP to form acetyl-adenylate (AcAMP) intermediate. In the second half reaction, it can then transfer the acetyl group from AcAMP to the sulfhydryl group of CoA, forming the product AcCoA. This is Acetyl-coenzyme A synthetase from Burkholderia mallei (strain NCTC 10247).